The following is a 239-amino-acid chain: Pyridoxal 5'-phosphate synthase subunit PdxS (239 aa).

Asp-21 is a binding site for D-ribose 5-phosphate. Lys-78 serves as the catalytic Schiff-base intermediate with D-ribose 5-phosphate. Gly-150 serves as a coordination point for D-ribose 5-phosphate. Residue Arg-162 participates in D-glyceraldehyde 3-phosphate binding. D-ribose 5-phosphate contacts are provided by residues Gly-211 and 232–233 (GS).

This sequence belongs to the PdxS/SNZ family. In terms of assembly, in the presence of PdxT, forms a dodecamer of heterodimers.

It catalyses the reaction aldehydo-D-ribose 5-phosphate + D-glyceraldehyde 3-phosphate + L-glutamine = pyridoxal 5'-phosphate + L-glutamate + phosphate + 3 H2O + H(+). The protein operates within cofactor biosynthesis; pyridoxal 5'-phosphate biosynthesis. In terms of biological role, catalyzes the formation of pyridoxal 5'-phosphate from ribose 5-phosphate (RBP), glyceraldehyde 3-phosphate (G3P) and ammonia. The ammonia is provided by the PdxT subunit. Can also use ribulose 5-phosphate and dihydroxyacetone phosphate as substrates, resulting from enzyme-catalyzed isomerization of RBP and G3P, respectively. In Francisella tularensis, this protein is Pyridoxal 5'-phosphate synthase subunit PdxS.